Reading from the N-terminus, the 202-residue chain is dITP/XTP pyrophosphatase (202 aa).

Residue 10–15 participates in substrate binding; it reads TSNRHK. The Proton acceptor role is filled by aspartate 70. Position 70 (aspartate 70) interacts with Mg(2+). Substrate-binding positions include serine 71, 153–156, lysine 176, and 181–182; these read FGYD and HR.

The protein belongs to the HAM1 NTPase family. In terms of assembly, homodimer. Mg(2+) is required as a cofactor.

The catalysed reaction is XTP + H2O = XMP + diphosphate + H(+). It catalyses the reaction dITP + H2O = dIMP + diphosphate + H(+). It carries out the reaction ITP + H2O = IMP + diphosphate + H(+). In terms of biological role, pyrophosphatase that catalyzes the hydrolysis of nucleoside triphosphates to their monophosphate derivatives, with a high preference for the non-canonical purine nucleotides XTP (xanthosine triphosphate), dITP (deoxyinosine triphosphate) and ITP. Seems to function as a house-cleaning enzyme that removes non-canonical purine nucleotides from the nucleotide pool, thus preventing their incorporation into DNA/RNA and avoiding chromosomal lesions. The chain is dITP/XTP pyrophosphatase from Methylacidiphilum infernorum (isolate V4) (Methylokorus infernorum (strain V4)).